Reading from the N-terminus, the 275-residue chain is Putative carbamate hydrolase RutD (275 aa).

Belongs to the AB hydrolase superfamily. Hydrolase RutD family.

The enzyme catalyses carbamate + 2 H(+) = NH4(+) + CO2. In terms of biological role, involved in pyrimidine catabolism. May facilitate the hydrolysis of carbamate, a reaction that can also occur spontaneously. In Escherichia coli (strain UTI89 / UPEC), this protein is Putative carbamate hydrolase RutD.